Here is a 190-residue protein sequence, read N- to C-terminus: Putative manganese efflux pump MntP (190 aa).

Transmembrane regions (helical) follow at residues Pro3–Gly23, Leu41–Ala61, Asp69–Ile89, Phe105–Gly125, Ile133–Met153, and Ile168–Ala188.

It belongs to the MntP (TC 9.B.29) family.

It is found in the cell inner membrane. In terms of biological role, probably functions as a manganese efflux pump. This is Putative manganese efflux pump MntP from Pseudomonas syringae pv. syringae (strain B728a).